We begin with the raw amino-acid sequence, 312 residues long: Ribosomal protein L11 methyltransferase (312 aa).

S-adenosyl-L-methionine contacts are provided by Thr162, Gly183, Asp205, and Asn248.

This sequence belongs to the methyltransferase superfamily. PrmA family.

It localises to the cytoplasm. The catalysed reaction is L-lysyl-[protein] + 3 S-adenosyl-L-methionine = N(6),N(6),N(6)-trimethyl-L-lysyl-[protein] + 3 S-adenosyl-L-homocysteine + 3 H(+). Functionally, methylates ribosomal protein L11. In Bacillus cereus (strain G9842), this protein is Ribosomal protein L11 methyltransferase.